The primary structure comprises 39 residues: Protein MchX (39 aa).

A helical transmembrane segment spans residues 15–37 (SALSSTLLLSLIMSATLLEYSLS).

The protein localises to the cell inner membrane. In terms of biological role, required for microcin H47 production. Possibly involved in a regulatory loop modulating its own expression and that of MchI and MchB. The chain is Protein MchX (mchX) from Escherichia coli.